Reading from the N-terminus, the 27-residue chain is Palustrin-1d (27 aa).

A disulfide bridge connects residues cysteine 21 and cysteine 27.

As to expression, expressed by the skin glands.

Its subcellular location is the secreted. Antimicrobial activity against Gram-negative bacterium E.coli. The polypeptide is Palustrin-1d (Lithobates palustris (Pickerel frog)).